A 270-amino-acid chain; its full sequence is Carboxy-S-adenosyl-L-methionine synthase (270 aa).

Residues Y65, 90 to 92 (GCS), 143 to 144 (DI), N158, and R225 each bind S-adenosyl-L-methionine.

The protein belongs to the class I-like SAM-binding methyltransferase superfamily. Cx-SAM synthase family. In terms of assembly, homodimer.

It carries out the reaction prephenate + S-adenosyl-L-methionine = carboxy-S-adenosyl-L-methionine + 3-phenylpyruvate + H2O. Its function is as follows. Catalyzes the conversion of S-adenosyl-L-methionine (SAM) to carboxy-S-adenosyl-L-methionine (Cx-SAM). In Chromohalobacter salexigens (strain ATCC BAA-138 / DSM 3043 / CIP 106854 / NCIMB 13768 / 1H11), this protein is Carboxy-S-adenosyl-L-methionine synthase.